The chain runs to 761 residues: Protein PHTF1 (761 aa).

Positions 6–150 constitute a PHTF domain; the sequence is RDAISWYQKK…VHCQIVSTQI (145 aa). 3 helical membrane-spanning segments follow: residues 77–97, 99–119, and 121–141; these read GLVR…VTSL, IFVW…LYLL, and PIVS…MGTV. Residues 152-184 are disordered; it reads RPSGNNGNRRRRKLRKTVNGDGSRDNGNNSPDK. A compositionally biased stretch (low complexity) spans 170–181; sequence NGDGSRDNGNNS. 2 N-linked (GlcNAc...) asparagine glycosylation sites follow: Asn179 and Asn224. 5 positions are modified to phosphoserine: Ser272, Ser276, Ser277, Ser333, and Ser335. Residues 345–414 form a disordered region; sequence VFSQGSRSGM…NTIHSGTKRD (70 aa). Low complexity predominate over residues 347–363; sequence SQGSRSGMSGGSRSLNL. N-linked (GlcNAc...) asparagine glycosylation is present at Asn362. Basic and acidic residues predominate over residues 364-375; the sequence is SRRDSESTRHDS. The N-linked (GlcNAc...) asparagine glycan is linked to Asn430. Transmembrane regions (helical) follow at residues 472–492, 514–534, 610–630, and 644–664; these read GVGY…FPFL, TLFC…INFI, VVVS…CAQV, and WEFL…ASLG. Residues Asn673 and Asn732 are each glycosylated (N-linked (GlcNAc...) asparagine). Residues 736–756 traverse the membrane as a helical segment; the sequence is VVILSAVSGVISDLLGFNIRL.

In terms of assembly, interacts with FEM1B. As to expression, widely expressed with highest levels in testis.

Its subcellular location is the endoplasmic reticulum membrane. The protein resides in the golgi apparatus. The protein localises to the cis-Golgi network membrane. This is Protein PHTF1 from Mus musculus (Mouse).